Reading from the N-terminus, the 302-residue chain is GATA transcription factor 28 (302 aa).

The disordered stretch occupies residues 47-66 (NAGGMSEGVETDIPSHPGNV). In terms of domain architecture, Tify spans 77–112 (GSEQGDQLTLSFQGQVYVFDSVLPEKVQAVLLLLGG). The tract at residues 119–141 (APPGLGSPHQNNRVSSLPGTPQR) is disordered. Over residues 126 to 141 (PHQNNRVSSLPGTPQR) the composition is skewed to polar residues. The CCT domain occupies 147-189 (RLASLVRFREKRKGRNFDKKIRYTVRKEVALRMQRNKGQFTSA). The GATA-type zinc finger occupies 217–273 (QHQEISCRHCGIGEKSTPMMRRGPAGPRTLCNACGLMWANKGAFRDLSKASPQTAQN).

It belongs to the type IV zinc-finger family. Class C subfamily. Predominantly expressed in shoot apices, inflorescences and roots.

It localises to the nucleus. Functionally, transcriptional activator that specifically binds 5'-GATA-3' or 5'-GAT-3' motifs within gene promoters. This is GATA transcription factor 28 (GATA28) from Arabidopsis thaliana (Mouse-ear cress).